Here is a 269-residue protein sequence, read N- to C-terminus: Homocitrate synthase subunit alpha (269 aa).

One can recognise a Pyruvate carboxyltransferase domain in the interval 3-255 (INIVDTTLRD…IYTGDFEDII (253 aa)).

The protein belongs to the alpha-IPM synthase/homocitrate synthase family. Heterodimer of an alpha and an omega chain.

The enzyme catalyses acetyl-CoA + 2-oxoglutarate + H2O = (2R)-homocitrate + CoA + H(+). Functionally, this protein is a Fe-Mo-cofactor biosynthetic component. The chain is Homocitrate synthase subunit alpha (nifV-ALPHA) from Clostridium pasteurianum.